The following is a 104-amino-acid chain: Protein MGF 110-2L (104 aa).

Residues 1 to 19 (MRFFSYLGLLLAGLASLQG) form the signal peptide.

This sequence belongs to the asfivirus MGF 110 family.

Plays a role in virus cell tropism, and may be required for efficient virus replication in macrophages. The chain is Protein MGF 110-2L from African swine fever virus (isolate Tick/South Africa/Pretoriuskop Pr4/1996) (ASFV).